Here is a 230-residue protein sequence, read N- to C-terminus: Ribonuclease 3 (230 aa).

The 121-residue stretch at 5–125 (YSRFYNILGY…VIGAIYLDSD (121 aa)) folds into the RNase III domain. Glu-40 is a binding site for Mg(2+). Asp-44 is an active-site residue. Mg(2+)-binding residues include Asp-111 and Glu-114. Residue Glu-114 is part of the active site. The DRBM domain maps to 153–223 (DSKSKLQEIL…AEKMIEMLSQ (71 aa)).

It belongs to the ribonuclease III family. Homodimer. Mg(2+) serves as cofactor.

The protein localises to the cytoplasm. It carries out the reaction Endonucleolytic cleavage to 5'-phosphomonoester.. Functionally, digests double-stranded RNA. Involved in the processing of primary rRNA transcript to yield the immediate precursors to the large and small rRNAs (23S and 16S). Also processes some mRNAs, and tRNAs when they are encoded in the rRNA operon. CRISPR (clustered regularly interspaced short palindromic repeat) is an adaptive immune system that provides protection against mobile genetic elements (viruses, transposable elements and conjugative plasmids). CRISPR clusters contain spacers, sequences complementary to antecedent mobile elements, and target invading nucleic acids. CRISPR clusters are transcribed and processed into CRISPR RNA (crRNA). In this organism endogenous ribonuclease 3 and Cas9 are required for correct coprocessing of pre-crRNA and the trans-encoded small RNA (tracrRNA). Cas9, crRNA and tracrRNA are required for cleavage of invading DNA. Complements pre-crRNA and tracrRNA coprocessing defects in an rnc deletion in S.pyogenes strain 370. This chain is Ribonuclease 3, found in Francisella tularensis subsp. novicida (strain U112).